A 559-amino-acid chain; its full sequence is Protein GRAVITROPIC IN THE LIGHT 1 (559 aa).

Residues 107-127 are disordered; that stretch reads AVNRREEYDTEEEENEEEGEI. The span at 114 to 127 shows a compositional bias: acidic residues; sequence YDTEEEENEEEGEI.

In terms of biological role, required for red (R) and far red (FR) light-induced and phytochrome-mediated deregulation of negative gravitropism leading to randomization of hypocotyl growth orientation. The protein is Protein GRAVITROPIC IN THE LIGHT 1 of Arabidopsis thaliana (Mouse-ear cress).